We begin with the raw amino-acid sequence, 276 residues long: Shikimate dehydrogenase (NADP(+)) (276 aa).

Shikimate is bound by residues 15 to 17 (SKS) and Thr-62. Lys-66 serves as the catalytic Proton acceptor. Residue Glu-78 participates in NADP(+) binding. Positions 87 and 103 each coordinate shikimate. Residues 128 to 132 (GAGGA) and Ile-217 each bind NADP(+). Tyr-219 is a shikimate binding site. Gly-240 provides a ligand contact to NADP(+).

The protein belongs to the shikimate dehydrogenase family. As to quaternary structure, homodimer.

The enzyme catalyses shikimate + NADP(+) = 3-dehydroshikimate + NADPH + H(+). Its pathway is metabolic intermediate biosynthesis; chorismate biosynthesis; chorismate from D-erythrose 4-phosphate and phosphoenolpyruvate: step 4/7. Functionally, involved in the biosynthesis of the chorismate, which leads to the biosynthesis of aromatic amino acids. Catalyzes the reversible NADPH linked reduction of 3-dehydroshikimate (DHSA) to yield shikimate (SA). The sequence is that of Shikimate dehydrogenase (NADP(+)) from Lysinibacillus sphaericus (strain C3-41).